We begin with the raw amino-acid sequence, 568 residues long: Putative ABC transporter ATP-binding protein CPE1583 (568 aa).

2 ABC transporter domains span residues 7–248 (IEFK…GIRE) and 303–536 (LEFK…ASLK). ATP contacts are provided by residues 41–48 (GPSGSGKS) and 336–343 (GKNGAGKS).

Belongs to the ABC transporter superfamily.

Its subcellular location is the cell membrane. Probably part of an ABC transporter complex. Responsible for energy coupling to the transport system. The polypeptide is Putative ABC transporter ATP-binding protein CPE1583 (Clostridium perfringens (strain 13 / Type A)).